We begin with the raw amino-acid sequence, 337 residues long: Protein MICROTUBULE BINDING PROTEIN 2C (337 aa).

Residues 80-147 form a disordered region; the sequence is RGSMTYTKMP…STSSLTEKDR (68 aa). Residues 89–103 are compositionally biased toward basic and acidic residues; the sequence is PSRESLYKKTSEVKG. A compositionally biased stretch (polar residues) spans 120–142; that stretch reads KNVSSSQDGYAENFSTPSSTSSL. 3 coiled-coil regions span residues 143–194, 223–250, and 294–314; these read TEKD…MKKD, VEKLEWEAMTSSKKVERLQEDLDLLQGE, and LQKMEAAREAYIAAVAAAKEN.

This sequence belongs to the microtubule binding protein 2C family. As to quaternary structure, interacts with KN-1. Binds to tobacco mosaic virus movement protein (TMV-MP) at microtubules. As to expression, constitutively expressed in leaves.

Its subcellular location is the cytoplasm. It localises to the cytoskeleton. Functionally, prevents homeodomain proteins (e.g. STM) association to plasmodesmata and, consequently, cell-to-cell transport. Binds to RNA. Alters KN1 RNA-binding capacity. Regulates cytoskeleton (e.g. actin) organization that determinates cell shape. Interferes with cell-to-cell transport of tobacco mosaic virus movement protein (TMV-MP) by mediating its accumulation at microtubules, thus interfering with cell-to-cell virus movement. The protein is Protein MICROTUBULE BINDING PROTEIN 2C of Nicotiana tabacum (Common tobacco).